We begin with the raw amino-acid sequence, 292 residues long: Ribonuclease HIII (292 aa).

The RNase H type-2 domain maps to 76 to 292 (TNLIGTDEVG…TQKAMKIAQL (217 aa)). D82, E83, and D186 together coordinate a divalent metal cation.

This sequence belongs to the RNase HII family. RnhC subfamily. Mn(2+) serves as cofactor. It depends on Mg(2+) as a cofactor.

The protein resides in the cytoplasm. The catalysed reaction is Endonucleolytic cleavage to 5'-phosphomonoester.. Its function is as follows. Endonuclease that specifically degrades the RNA of RNA-DNA hybrids. The chain is Ribonuclease HIII from Lactococcus lactis subsp. cremoris (strain SK11).